We begin with the raw amino-acid sequence, 68 residues long: MPKLKTKSAVKKRFSLSSSGKLKVTQAGKRHFMRRRTKKQLRNLRSTTTLIGQDAKNIIKYLMPYGVQ.

Belongs to the bacterial ribosomal protein bL35 family.

The protein is Large ribosomal subunit protein bL35 of Orientia tsutsugamushi (strain Boryong) (Rickettsia tsutsugamushi).